The sequence spans 303 residues: uncharacterized protein (303 aa).

A run of 4 helical transmembrane segments spans residues 55-77 (FLVK…LFIQ), 92-111 (PAVF…TKII), 208-230 (FSLP…ATSL), and 240-257 (IPHI…KILI).

It localises to the cell membrane. This is an uncharacterized protein from Bacillus subtilis (strain 168).